Reading from the N-terminus, the 194-residue chain is MDISRLISLFSKLPGLGPASSRRIVLHLLRHRHDVMTPLANGIRELEESTKECEICFNLDVTSPCSICTDSRRDKSLLCIVEELGDLWAFEKGRIYQGMYHVLGGVLSALSGVGPEDLNMSSIPERVRLHGVKEVIVATGSDMDGQVTCHYIAQSIKSTGVKVTRLACGIPLGGEIDYLDEGTLRAALSSRYII.

The segment at 53–68 adopts a C4-type zinc-finger fold; sequence CEICFNLDVTSPCSIC. A Toprim domain is found at 76–171; it reads SLLCIVEELG…KVTRLACGIP (96 aa).

This sequence belongs to the RecR family.

In terms of biological role, may play a role in DNA repair. It seems to be involved in an RecBC-independent recombinational process of DNA repair. It may act with RecF and RecO. This chain is Recombination protein RecR, found in Anaplasma phagocytophilum (strain HZ).